Here is a 183-residue protein sequence, read N- to C-terminus: NEDD8-conjugating enzyme Ubc12 (183 aa).

Met1 is subject to N-acetylmethionine. The disordered stretch occupies residues 1-28; that stretch reads MIKLFSLKQQKKEEESAGGTKGSSKKAS. Residues 29–173 enclose the UBC core domain; it reads AAQLRIQKDI…VQRSMRGGYI (145 aa). The active-site Glycyl thioester intermediate is Cys111.

Belongs to the ubiquitin-conjugating enzyme family. UBC12 subfamily. Post-translationally, the acetylation of Met-1 increases affinity for DCUN1D1 by about 2 orders of magnitude and is crucial for NEDD8 transfer to cullins.

It carries out the reaction [E1 NEDD8-activating enzyme]-S-[NEDD8 protein]-yl-L-cysteine + [E2 NEDD8-conjugating enzyme]-L-cysteine = [E1 NEDD8-activating enzyme]-L-cysteine + [E2 NEDD8-conjugating enzyme]-S-[NEDD8-protein]-yl-L-cysteine.. It participates in protein modification; protein neddylation. Accepts the ubiquitin-like protein NEDD8 from the UBA3-NAE1 E1 complex and catalyzes its covalent attachment to other proteins. The specific interaction with the E3 ubiquitin ligase rbx1, but not rbx2, suggests that the rbx1-ube2m complex neddylates specific target proteins, such as cul1, cul2, cul3 and cul4. Involved in cell proliferation. The sequence is that of NEDD8-conjugating enzyme Ubc12 (ube2m) from Xenopus laevis (African clawed frog).